Here is a 256-residue protein sequence, read N- to C-terminus: Thiazole synthase (256 aa).

Catalysis depends on lysine 95, which acts as the Schiff-base intermediate with DXP. 1-deoxy-D-xylulose 5-phosphate contacts are provided by residues glycine 156, 182-183, and 204-205; these read AG and NT.

It belongs to the ThiG family. In terms of assembly, homotetramer. Forms heterodimers with either ThiH or ThiS.

The protein resides in the cytoplasm. The catalysed reaction is [ThiS sulfur-carrier protein]-C-terminal-Gly-aminoethanethioate + 2-iminoacetate + 1-deoxy-D-xylulose 5-phosphate = [ThiS sulfur-carrier protein]-C-terminal Gly-Gly + 2-[(2R,5Z)-2-carboxy-4-methylthiazol-5(2H)-ylidene]ethyl phosphate + 2 H2O + H(+). It participates in cofactor biosynthesis; thiamine diphosphate biosynthesis. Its function is as follows. Catalyzes the rearrangement of 1-deoxy-D-xylulose 5-phosphate (DXP) to produce the thiazole phosphate moiety of thiamine. Sulfur is provided by the thiocarboxylate moiety of the carrier protein ThiS. In vitro, sulfur can be provided by H(2)S. The polypeptide is Thiazole synthase (Escherichia coli O81 (strain ED1a)).